The sequence spans 462 residues: Glycoprotein endo-alpha-1,2-mannosidase (462 aa).

The Cytoplasmic portion of the chain corresponds to 1–9 (MAKFRRRTC). The helical; Signal-anchor for type II membrane protein transmembrane segment at 10–30 (IILSLFIVFIFSLMMGLKMLW) threads the bilayer. The Lumenal segment spans residues 31-462 (PNAASFGPPF…YALDQQLPAS (432 aa)). A catalytic region spans residues 60–462 (DFQRSDRIDM…YALDQQLPAS (403 aa)).

This sequence belongs to the glycosyl hydrolase 99 family. Undergoes proteolytic cleavage in the C-terminal region. As to expression, highly expressed in the liver and kidney.

Its subcellular location is the golgi apparatus membrane. It catalyses the reaction N-{alpha-Glc-(1-&gt;3)-alpha-Man-(1-&gt;2)-alpha-Man-(1-&gt;2)-alpha-Man-(1-&gt;3)-[alpha-Man-(1-&gt;2)-alpha-Man-(1-&gt;3)-[alpha-Man-(1-&gt;2)-alpha-Man-(1-&gt;6)]-alpha-Man-(1-&gt;6)]-beta-Man-(1-&gt;4)-beta-GlcNAc-(1-&gt;4)-beta-GlcNAc}-L-asparaginyl-[protein] + H2O = alpha-D-glucosyl-(1-&gt;3)-D-mannopyranose + N(4)-{alpha-D-Man-(1-&gt;2)-alpha-D-Man-(1-&gt;3)-[alpha-D-Man-(1-&gt;2)-alpha-D-Man-(1-&gt;3)-[alpha-D-Man-(1-&gt;2)-alpha-D-Man-(1-&gt;6)]-alpha-D-Man-(1-&gt;6)]-beta-D-Man-(1-&gt;4)-beta-D-GlaNAc-(1-&gt;4)-beta-D-GlcNAc}-L-asparaginyl-[protein] (N-glucan mannose isomer 8A1,2,3B1,2). This chain is Glycoprotein endo-alpha-1,2-mannosidase (Manea), found in Rattus norvegicus (Rat).